A 1843-amino-acid chain; its full sequence is Proteasome activator complex subunit 4 (1843 aa).

The span at 1 to 11 (MEPAERAGVGE) shows a compositional bias: low complexity. A disordered region spans residues 1–25 (MEPAERAGVGEPPEPGGRPEPGPRG). The span at 12–22 (PPEPGGRPEPG) shows a compositional bias: pro residues. 2 HEAT repeats span residues 475–519 (PEGP…LVDC) and 998–1037 (NFCC…NHSG). Ser1121 carries the post-translational modification Phosphoserine. 2 HEAT repeats span residues 1179–1217 (RVLP…QLKR) and 1354–1392 (DAFL…GSKH). The residue at position 1614 (Ser1614) is a Phosphoserine. HEAT repeat units lie at residues 1636 to 1674 (PHQV…YNLF) and 1680 to 1718 (EDAV…CNFL). Residues 1650-1738 (ARSSSWHARY…EQLCKTKLPK (89 aa)) form a bromodomain-like (BRDL) region. At Ser1746 the chain carries Phosphoserine.

It belongs to the BLM10 family. In terms of assembly, homodimer. Interacts with the 20S and 26S proteasomes. Component of the spermatoproteasome, a form of the proteasome specifically found in testis.

It is found in the cytoplasm. It localises to the cytosol. Its subcellular location is the nucleus. The protein resides in the nucleus speckle. Associated component of the proteasome that specifically recognizes acetylated histones and promotes ATP- and ubiquitin-independent degradation of core histones during spermatogenesis and DNA damage response. Recognizes and binds acetylated histones via its bromodomain-like (BRDL) region and activates the proteasome by opening the gated channel for substrate entry. Binds to the core proteasome via its C-terminus, which occupies the same binding sites as the proteasomal ATPases, opening the closed structure of the proteasome via an active gating mechanism. Component of the spermatoproteasome, a form of the proteasome specifically found in testis: binds to acetylated histones and promotes degradation of histones, thereby participating actively to the exchange of histones during spermatogenesis. Also involved in DNA damage response in somatic cells, by promoting degradation of histones following DNA double-strand breaks. The polypeptide is Proteasome activator complex subunit 4 (Homo sapiens (Human)).